Reading from the N-terminus, the 359-residue chain is Replication-associated protein (359 aa).

A CRESS-DNA virus Rep endonuclease domain is found at 8–116 (QINAKHYFLT…DGDVLEWGTF (109 aa)). The RCR-1 motif lies at 15-18 (FLTF). Glutamate 49, histidine 57, and histidine 59 together coordinate a divalent metal cation. Positions 57–59 (HLH) match the RCR-2 motif. The active-site For DNA cleavage activity is tyrosine 103. An RCR-3 motif is present at residues 103–106 (YIDK). Aspartate 107 contributes to the a divalent metal cation binding site. Residues 143 to 153 (KSEALDVIKEL) are binding to RBR1. The oligomerization stretch occupies residues 156 to 176 (RDYILHFHNINSNLNMVFQVP). Residue 221 to 228 (GDSRTGKT) participates in ATP binding.

It belongs to the geminiviridae Rep protein family. As to quaternary structure, homooligomer. Interacts with the replication enhancer protein (REn). Interacts with host retinoblastoma-related protein 1 (RBR1), and may thereby induce the transcription of host replicative enzymes even if the cell is not dividing anymore. Interacts with host PCNA. Interacts with host SCE1 protein. Mg(2+) is required as a cofactor. Requires Mn(2+) as cofactor.

The protein localises to the host nucleus. Its function is as follows. Essential for the replication of viral ssDNA. The closed circular ssDNA genome is first converted to a superhelical dsDNA. Rep binds a specific region at the genome origin of replication. It introduces an endonucleolytic nick within the conserved sequence 5'-TAATATTAC-3' in the intergenic region of the genome present in all geminiviruses, thereby initiating the rolling circle replication (RCR). Following cleavage, binds covalently to the 5'-phosphate of DNA as a tyrosyl ester. The cleavage gives rise to a free 3'-OH that serves as a primer for the cellular DNA polymerase. The polymerase synthesizes the (+) strand DNA by rolling circle mechanism. After one round of replication, a Rep-catalyzed nucleotidyl transfer reaction releases a circular single-stranded virus genome, thereby terminating the replication. Displays origin-specific DNA cleavage, nucleotidyl transferase, ATPase and helicase activities. This chain is Replication-associated protein, found in Solanum lycopersicum (Tomato).